The following is a 225-amino-acid chain: RNA chaperone ProQ (225 aa).

The interval 107-169 (KARVQAQRAA…VAAKAPREER (63 aa)) is disordered. A compositionally biased stretch (low complexity) spans 109-118 (RVQAQRAAQQ). Residues 137–146 (RERKPRPQQP) show a composition bias toward basic residues. Residues 147-156 (RRKEGAEQRK) show a composition bias toward basic and acidic residues.

The protein belongs to the ProQ family.

The protein localises to the cytoplasm. Functionally, RNA chaperone with significant RNA binding, RNA strand exchange and RNA duplexing activities. May regulate ProP activity through an RNA-based, post-transcriptional mechanism. This Klebsiella pneumoniae subsp. pneumoniae (strain ATCC 700721 / MGH 78578) protein is RNA chaperone ProQ.